The primary structure comprises 344 residues: Acireductone dioxygenase (344 aa).

The Fe(2+) site is built by His-92, His-94, Glu-98, and His-137. The Ni(2+) site is built by His-92, His-94, Glu-98, and His-137.

It belongs to the acireductone dioxygenase (ARD) family. It depends on Fe(2+) as a cofactor. Ni(2+) serves as cofactor.

It localises to the cytoplasm. The protein localises to the nucleus. The enzyme catalyses 1,2-dihydroxy-5-(methylsulfanyl)pent-1-en-3-one + O2 = 4-methylsulfanyl-2-oxobutanoate + formate + 2 H(+). The catalysed reaction is 1,2-dihydroxy-5-(methylsulfanyl)pent-1-en-3-one + O2 = 3-(methylsulfanyl)propanoate + CO + formate + 2 H(+). The protein operates within amino-acid biosynthesis; L-methionine biosynthesis via salvage pathway; L-methionine from S-methyl-5-thio-alpha-D-ribose 1-phosphate: step 5/6. Its function is as follows. Catalyzes 2 different reactions between oxygen and the acireductone 1,2-dihydroxy-3-keto-5-methylthiopentene (DHK-MTPene) depending upon the metal bound in the active site. Fe-containing acireductone dioxygenase (Fe-ARD) produces formate and 2-keto-4-methylthiobutyrate (KMTB), the alpha-ketoacid precursor of methionine in the methionine recycle pathway. Ni-containing acireductone dioxygenase (Ni-ARD) produces methylthiopropionate, carbon monoxide and formate, and does not lie on the methionine recycle pathway. The chain is Acireductone dioxygenase from Leishmania major.